The following is a 1179-amino-acid chain: MAACGRVRRMFRLSAALHLLLLFAAGAEKLPGQGVHSQGQGPGANFVSFVGQAGGGGPAGQQLPQLPQSSQLQQQQQQQQQQQQPQPPQPPFPAGGPPARRGGAGAGGGWKLAEEESCREDVTRVCPKHTWSNNLAVLECLQDVREPENEISSDCNHLLWNYKLNLTTDPKFESVAREVCKSTITEIKECADEPVGKGYMVSCLVDHRGNITEYQCHQYITKMTAIIFSDYRLICGFMDDCKNDINILKCGSIRLGEKDAHSQGEVVSCLEKGLVKEAEEREPKIQVSELCKKAILRVAELSSDDFHLDRHLYFACRDDRERFCENTQAGEGRVYKCLFNHKFEESMSEKCREALTTRQKLIAQDYKVSYSLAKSCKSDLKKYRCNVENLPRSREARLSYLLMCLESAVHRGRQVSSECQGEMLDYRRMLMEDFSLSPEIILSCRGEIEHHCSGLHRKGRTLHCLMKVVRGEKGNLGMNCQQALQTLIQETDPGADYRIDRALNEACESVIQTACKHIRSGDPMILSCLMEHLYTEKMVEDCEHRLLELQYFISRDWKLDPVLYRKCQGDASRLCHTHGWNETSEFMPQGAVFSCLYRHAYRTEEQGRRLSRECRAEVQRILHQRAMDVKLDPALQDKCLIDLGKWCSEKTETGQELECLQDHLDDLVVECRDIVGNLTELESEDIQIEALLMRACEPIIQNFCHDVADNQIDSGDLMECLIQNKHQKDMNEKCAIGVTHFQLVQMKDFRFSYKFKMACKEDVLKLCPNIKKKVDVVICLSTTVRNDTLQEAKEHRVSLKCRRQLRVEELEMTEDIRLEPDLYEACKSDIKNFCSAVQYGNAQIIECLKENKKQLSTRCHQKVFKLQETEMMDPELDYTLMRVCKQMIKRFCPEADSKTMLQCLKQNKNSELMDPKCKQMITKRQITQNTDYRLNPMLRKACKADIPKFCHGILTKAKDDSELEGQVISCLKLRYADQRLSSDCEDQIRIIIQESALDYRLDPQLQLHCSDEISSLCAEEAAAQEQTGQVEECLKVNLLKIKTELCKKEVLNMLKESKADIFVDPVLHTACALDIKHHCAAITPGRGRQMSCLMEALEDKRVRLQPECKKRLNDRIEMWSYAAKVAPADGFSDLAMQVMTSPSKNYILSVISGSICILFLIGLMCGRITKRVTRELKDR.

A signal peptide spans 1–29 (MAACGRVRRMFRLSAALHLLLLFAAGAEK). Residues 30-1145 (LPGQGVHSQG…MQVMTSPSKN (1116 aa)) lie on the Extracellular side of the membrane. The disordered stretch occupies residues 32–112 (GQGVHSQGQG…GAGAGGGWKL (81 aa)). Residues 60–84 (GQQLPQLPQSSQLQQQQQQQQQQQQ) show a composition bias toward low complexity. Residues 85-96 (PQPPQPPFPAGG) are compositionally biased toward pro residues. Cys-rich GLG1 repeat units follow at residues 116 to 149 (ESCR…EPEN), 150 to 212 (EISS…GNIT), 215 to 278 (QCHQ…VKEA), 286 to 346 (QVSE…FEES), 347 to 413 (MSEK…HRGR), 414 to 473 (QVSS…RGEK), 475 to 537 (NLGM…YTEK), 538 to 604 (MVED…YRTE), 609 to 668 (RLSR…DDLV), 670 to 728 (ECRD…KHQK), 729 to 788 (DMNE…RNDT), 796 to 856 (RVSL…KQLS), 858 to 911 (RCHQ…KNSE), 912 to 979 (LMDP…ADQR), 980 to 1035 (LSSD…ECLK), and 1041 to 1101 (IKTE…EDKR). N165 and N210 each carry an N-linked (GlcNAc...) asparagine glycan. An N-linked (GlcNAc...) asparagine glycan is attached at N581. N677 and N786 each carry an N-linked (GlcNAc...) asparagine glycan. S961 carries the post-translational modification Phosphoserine. Residues 1146–1166 (YILSVISGSICILFLIGLMCG) traverse the membrane as a helical segment. Topologically, residues 1167-1179 (RITKRVTRELKDR) are cytoplasmic.

Post-translationally, fucosylation is essential for binding to E-selectin. In terms of processing, N-glycosylated. Contains sialic acid residues. Widely expressed. Highest levels in pancreas, skeletal muscle, placenta, heart, testis and ovary. Also found in the kidney, liver, lung and brain.

Its subcellular location is the golgi apparatus membrane. It localises to the golgi outpost. The protein localises to the cytoplasm. The protein resides in the cytoskeleton. It is found in the microtubule organizing center. Binds fibroblast growth factor and E-selectin (cell-adhesion lectin on endothelial cells mediating the binding of neutrophils). The protein is Golgi apparatus protein 1 (GLG1) of Homo sapiens (Human).